A 619-amino-acid chain; its full sequence is MEVEATEARSPGPCYKRSGRRYKCLFCTKTFPNAPRAARHAATHTPTDCTEEVREAQPKVDTEPKAEEASGDKVSASVAKPRPYACPLCPKAYKTAPELRSHGRSHTGEKPFPCPECGRRFMQPVCLRVHLASHAGELPFRCTHCPKAYGTLSKLKIHQRGHTGERPYACPDCGKSFADPSVFRKHRRTHAGLRPYSCERCGKAYAELKDLRNHERSHTGERPFLCSECGKSFSRSSSLTCHQRIHAAQKPYRCPACGKGFTQLSSYQSHERTHSGEKPFLCPRCGRMFSDPSSFRRHQRAHEGVKPYRCEKCGKDFRQPADLAMHRRVHTGDRPFKCLQCDKTFVASWDLKRHALVHSGQRPFRCEECGRAFAERASLTKHSRMHSGERPFHCNACGKSFVVLSSLRKHERTHRSNETTGAAPQQELVLGLALPVGVVGEGSAAPVAGAGVGDAPAGLLGLPPESGGVVATQWQVVGMTVEHVECQDAGVGEAPSTLGDAGEVGGEETDEKPPQFVCRECKETFSTLTLLRRHERSHPELRPFPCTQCGKSFSDRAGLRKHSRTHSSVRPYSCSQCPKAFLSASDLRKHERTHPVPIGTPIPLEPLVALLGMPEEGSA.

At M1 the chain carries N-acetylmethionine. At S10 the chain carries Phosphoserine. The segment at 22–44 adopts a C2H2-type 1 zinc-finger fold; the sequence is YKCLFCTKTFPNAPRAARHAATH. Residues 36-74 are disordered; sequence RAARHAATHTPTDCTEEVREAQPKVDTEPKAEEASGDKV. A compositionally biased stretch (basic and acidic residues) spans 51-71; that stretch reads EEVREAQPKVDTEPKAEEASG. Glycyl lysine isopeptide (Lys-Gly) (interchain with G-Cter in SUMO2) cross-links involve residues K59, K65, and K80. 11 consecutive C2H2-type zinc fingers follow at residues 84–106, 112–134, 140–162, 168–190, 196–218, 224–246, 252–274, 280–302, 308–330, 336–358, and 364–386; these read YACP…GRSH, FPCP…LASH, FRCT…QRGH, YACP…RRTH, YSCE…ERSH, FLCS…QRIH, YRCP…ERTH, FLCP…QRAH, YRCE…RRVH, FKCL…ALVH, and FRCE…SRMH. A Glycyl lysine isopeptide (Lys-Gly) (interchain with G-Cter in SUMO2) cross-link involves residue K154. Phosphoserine is present on S387. The C2H2-type 13 zinc finger occupies 392–414; the sequence is FHCNACGKSFVVLSSLRKHERTH. The interval 491-513 is disordered; it reads VGEAPSTLGDAGEVGGEETDEKP. A Glycyl lysine isopeptide (Lys-Gly) (interchain with G-Cter in SUMO2) cross-link involves residue K512. C2H2-type zinc fingers lie at residues 516 to 538, 544 to 566, and 572 to 594; these read FVCR…ERSH, FPCT…SRTH, and YSCS…ERTH.

The protein belongs to the krueppel C2H2-type zinc-finger protein family.

The protein resides in the nucleus. Its function is as follows. May be involved in transcriptional regulation. May play a role in DNA repair process. The chain is Zinc finger protein 668 (Znf668) from Mus musculus (Mouse).